Consider the following 286-residue polypeptide: 4-hydroxy-tetrahydrodipicolinate synthase (286 aa).

Thr42 contributes to the pyruvate binding site. Tyr129 (proton donor/acceptor) is an active-site residue. Lys157 (schiff-base intermediate with substrate) is an active-site residue. Ile196 is a binding site for pyruvate.

This sequence belongs to the DapA family. In terms of assembly, homotetramer; dimer of dimers.

It is found in the cytoplasm. It carries out the reaction L-aspartate 4-semialdehyde + pyruvate = (2S,4S)-4-hydroxy-2,3,4,5-tetrahydrodipicolinate + H2O + H(+). It functions in the pathway amino-acid biosynthesis; L-lysine biosynthesis via DAP pathway; (S)-tetrahydrodipicolinate from L-aspartate: step 3/4. Functionally, catalyzes the condensation of (S)-aspartate-beta-semialdehyde [(S)-ASA] and pyruvate to 4-hydroxy-tetrahydrodipicolinate (HTPA). This chain is 4-hydroxy-tetrahydrodipicolinate synthase, found in Chlamydia trachomatis serovar A (strain ATCC VR-571B / DSM 19440 / HAR-13).